The primary structure comprises 460 residues: Serine--tRNA ligase (460 aa).

255-257 (TAE) contributes to the L-serine binding site. ATP-binding positions include 286–288 (RKE) and V302. E309 contributes to the L-serine binding site. An ATP-binding site is contributed by 373–376 (EMVS). T409 serves as a coordination point for L-serine.

The protein belongs to the class-II aminoacyl-tRNA synthetase family. Type-1 seryl-tRNA synthetase subfamily. Homodimer. The tRNA molecule binds across the dimer.

Its subcellular location is the cytoplasm. The enzyme catalyses tRNA(Ser) + L-serine + ATP = L-seryl-tRNA(Ser) + AMP + diphosphate + H(+). The catalysed reaction is tRNA(Sec) + L-serine + ATP = L-seryl-tRNA(Sec) + AMP + diphosphate + H(+). Its pathway is aminoacyl-tRNA biosynthesis; selenocysteinyl-tRNA(Sec) biosynthesis; L-seryl-tRNA(Sec) from L-serine and tRNA(Sec): step 1/1. In terms of biological role, catalyzes the attachment of serine to tRNA(Ser). Is also able to aminoacylate tRNA(Sec) with serine, to form the misacylated tRNA L-seryl-tRNA(Sec), which will be further converted into selenocysteinyl-tRNA(Sec). This is Serine--tRNA ligase from Hyperthermus butylicus (strain DSM 5456 / JCM 9403 / PLM1-5).